An 824-amino-acid chain; its full sequence is AMP deaminase 2 (824 aa).

The disordered stretch occupies residues 1–43 (MASYPGPGKSKAKYPFKKRAGLQASAAAPEARSGLGASPLQSA). Residues 10–20 (SKAKYPFKKRA) are compositionally biased toward basic residues. Arg44 is modified (omega-N-methylarginine). Ser45, Ser63, and Ser79 each carry phosphoserine. At Tyr90 the chain carries Phosphotyrosine. A phosphoserine mark is found at Ser96 and Ser113. Phosphothreonine is present on Thr133. A phosphoserine mark is found at Ser135 and Ser137. The Zn(2+) site is built by His364 and His366. Substrate contacts are provided by residues His366 and 435–440 (KFNAKY). His633 lines the Zn(2+) pocket. Glu636 lines the substrate pocket. The Proton acceptor role is filled by His655. Asp710 serves as a coordination point for Zn(2+). 711 to 714 (DPLQ) contacts substrate.

It belongs to the metallo-dependent hydrolases superfamily. Adenosine and AMP deaminases family. Homotetramer. Zn(2+) serves as cofactor.

The enzyme catalyses AMP + H2O + H(+) = IMP + NH4(+). Its pathway is purine metabolism; IMP biosynthesis via salvage pathway; IMP from AMP: step 1/1. AMP deaminase plays a critical role in energy metabolism. Catalyzes the deamination of AMP to IMP and plays an important role in the purine nucleotide cycle. The sequence is that of AMP deaminase 2 from Mus musculus (Mouse).